A 361-amino-acid chain; its full sequence is Peptide chain release factor 1 (361 aa).

The residue at position 235 (glutamine 235) is an N5-methylglutamine.

This sequence belongs to the prokaryotic/mitochondrial release factor family. Methylated by PrmC. Methylation increases the termination efficiency of RF1.

The protein resides in the cytoplasm. Functionally, peptide chain release factor 1 directs the termination of translation in response to the peptide chain termination codons UAG and UAA. This chain is Peptide chain release factor 1, found in Buchnera aphidicola subsp. Acyrthosiphon pisum (strain 5A).